A 72-amino-acid chain; its full sequence is Translation initiation factor IF-1 (72 aa).

Residues 1-72 enclose the S1-like domain; the sequence is MAKEEVLEFP…TKGRITYRFK (72 aa).

This sequence belongs to the IF-1 family. Component of the 30S ribosomal translation pre-initiation complex which assembles on the 30S ribosome in the order IF-2 and IF-3, IF-1 and N-formylmethionyl-tRNA(fMet); mRNA recruitment can occur at any time during PIC assembly.

Its subcellular location is the cytoplasm. In terms of biological role, one of the essential components for the initiation of protein synthesis. Stabilizes the binding of IF-2 and IF-3 on the 30S subunit to which N-formylmethionyl-tRNA(fMet) subsequently binds. Helps modulate mRNA selection, yielding the 30S pre-initiation complex (PIC). Upon addition of the 50S ribosomal subunit IF-1, IF-2 and IF-3 are released leaving the mature 70S translation initiation complex. The chain is Translation initiation factor IF-1 from Sinorhizobium medicae (strain WSM419) (Ensifer medicae).